We begin with the raw amino-acid sequence, 266 residues long: NADH dehydrogenase [ubiquinone] iron-sulfur protein 3, mitochondrial (266 aa).

A mitochondrion-targeting transit peptide spans 1 to 38 (MAAAVAAAARGCWQRLVGSAAPARVAGRPSVLLLPVRR).

This sequence belongs to the complex I 30 kDa subunit family. As to quaternary structure, core subunit of respiratory chain NADH dehydrogenase (Complex I) which is composed of 45 different subunits. Interacts with NDUFAF3. Interacts with RAB5IF. Found in subcomplexes containing subunits NDUFS2, MT-ND1 and NDUFA13.

It is found in the mitochondrion inner membrane. The catalysed reaction is a ubiquinone + NADH + 5 H(+)(in) = a ubiquinol + NAD(+) + 4 H(+)(out). In terms of biological role, core subunit of the mitochondrial membrane respiratory chain NADH dehydrogenase (Complex I) which catalyzes electron transfer from NADH through the respiratory chain, using ubiquinone as an electron acceptor. Essential for the catalytic activity and assembly of complex I. This Bos taurus (Bovine) protein is NADH dehydrogenase [ubiquinone] iron-sulfur protein 3, mitochondrial (NDUFS3).